The primary structure comprises 266 residues: MPDWLIALILGLIEGLTEFIPVSSTGHLLLLGHFLGFHSPGNTFQVLIQLGAILAITGVYFGRLWGLLTTLPTEPGSRRFVIGILLAFLPAVFVGVAAHDFIKTVLYETPALVCSTLIIGGFILLALDRMKLEPRYTDVAEYPLKTAFIIGLFQCLALVPGVSRSGATIAGALLLKCDKRSAAEFSFFLAMPTMAGAFAYDLYKNIDKLSTNDLGLIGIGFLAALVSGVFVVKTVLDFITRHGFAPFAYWRIAVGVVGLALLYIPR.

8 helical membrane passes run 4 to 24 (WLIA…PVSS), 46 to 66 (VLIQ…RLWG), 82 to 102 (IGIL…HDFI), 105 to 125 (VLYE…FILL), 142 to 162 (YPLK…VPGV), 182 to 202 (AAEF…AYDL), 216 to 236 (LIGI…KTVL), and 244 to 264 (FAPF…LLYI).

Belongs to the UppP family.

The protein resides in the cell inner membrane. The catalysed reaction is di-trans,octa-cis-undecaprenyl diphosphate + H2O = di-trans,octa-cis-undecaprenyl phosphate + phosphate + H(+). Its function is as follows. Catalyzes the dephosphorylation of undecaprenyl diphosphate (UPP). Confers resistance to bacitracin. The chain is Undecaprenyl-diphosphatase from Caulobacter vibrioides (strain ATCC 19089 / CIP 103742 / CB 15) (Caulobacter crescentus).